Reading from the N-terminus, the 316-residue chain is HPr kinase/phosphorylase (316 aa).

Active-site residues include histidine 143 and lysine 164. 158–165 contacts ATP; sequence GEAGSGKS. Serine 165 is a Mg(2+) binding site. Aspartate 182 acts as the Proton acceptor; for phosphorylation activity. Proton donor; for dephosphorylation activity in catalysis. An important for the catalytic mechanism of both phosphorylation and dephosphorylation region spans residues 206–215; the sequence is LEVRGLGVLN. Glutamate 207 is a binding site for Mg(2+). Residue arginine 251 is part of the active site. The interval 272-277 is important for the catalytic mechanism of dephosphorylation; the sequence is PVMPGR.

Belongs to the HPrK/P family. In terms of assembly, homohexamer. It depends on Mg(2+) as a cofactor.

It carries out the reaction [HPr protein]-L-serine + ATP = [HPr protein]-O-phospho-L-serine + ADP + H(+). The enzyme catalyses [HPr protein]-O-phospho-L-serine + phosphate + H(+) = [HPr protein]-L-serine + diphosphate. Catalyzes the ATP- as well as the pyrophosphate-dependent phosphorylation of a specific serine residue in HPr, a phosphocarrier protein of the phosphoenolpyruvate-dependent sugar phosphotransferase system (PTS). HprK/P also catalyzes the pyrophosphate-producing, inorganic phosphate-dependent dephosphorylation (phosphorolysis) of seryl-phosphorylated HPr (P-Ser-HPr). The protein is HPr kinase/phosphorylase of Xanthomonas euvesicatoria pv. vesicatoria (strain 85-10) (Xanthomonas campestris pv. vesicatoria).